A 266-amino-acid polypeptide reads, in one-letter code: Thymidylate synthase (266 aa).

Residue arginine 24 coordinates dUMP. Position 54 (histidine 54) interacts with (6R)-5,10-methylene-5,6,7,8-tetrahydrofolate. 129–130 (RR) lines the dUMP pocket. The active-site Nucleophile is the cysteine 149. DUMP-binding positions include 169 to 172 (RSAD), asparagine 180, and 210 to 212 (HIY). A (6R)-5,10-methylene-5,6,7,8-tetrahydrofolate-binding site is contributed by aspartate 172. Alanine 265 is a (6R)-5,10-methylene-5,6,7,8-tetrahydrofolate binding site.

This sequence belongs to the thymidylate synthase family. Bacterial-type ThyA subfamily. In terms of assembly, homodimer.

It localises to the cytoplasm. The catalysed reaction is dUMP + (6R)-5,10-methylene-5,6,7,8-tetrahydrofolate = 7,8-dihydrofolate + dTMP. It functions in the pathway pyrimidine metabolism; dTTP biosynthesis. Catalyzes the reductive methylation of 2'-deoxyuridine-5'-monophosphate (dUMP) to 2'-deoxythymidine-5'-monophosphate (dTMP) while utilizing 5,10-methylenetetrahydrofolate (mTHF) as the methyl donor and reductant in the reaction, yielding dihydrofolate (DHF) as a by-product. This enzymatic reaction provides an intracellular de novo source of dTMP, an essential precursor for DNA biosynthesis. The chain is Thymidylate synthase from Nocardia farcinica (strain IFM 10152).